The following is a 441-amino-acid chain: Arginine biosynthesis bifunctional protein ArgJ, mitochondrial (441 aa).

Residues 1–8 (MRISSTLL) constitute a mitochondrion transit peptide. Substrate-binding residues include threonine 177, lysine 204, threonine 215, glutamate 301, asparagine 436, and serine 441. Threonine 215 acts as the Nucleophile in catalysis.

It belongs to the ArgJ family. Heterodimer of an alpha and a beta chain. In terms of processing, the alpha and beta chains are autoproteolytically processed from a single precursor protein within the mitochondrion.

It localises to the mitochondrion matrix. It carries out the reaction N(2)-acetyl-L-ornithine + L-glutamate = N-acetyl-L-glutamate + L-ornithine. The catalysed reaction is L-glutamate + acetyl-CoA = N-acetyl-L-glutamate + CoA + H(+). It participates in amino-acid biosynthesis; L-arginine biosynthesis; L-ornithine and N-acetyl-L-glutamate from L-glutamate and N(2)-acetyl-L-ornithine (cyclic): step 1/1. Its pathway is amino-acid biosynthesis; L-arginine biosynthesis; N(2)-acetyl-L-ornithine from L-glutamate: step 1/4. Catalyzes two activities which are involved in the cyclic version of arginine biosynthesis: the synthesis of acetylglutamate from glutamate and acetyl-CoA, and of ornithine by transacetylation between acetylornithine and glutamate. This Saccharomyces cerevisiae (strain Lalvin EC1118 / Prise de mousse) (Baker's yeast) protein is Arginine biosynthesis bifunctional protein ArgJ, mitochondrial.